A 420-amino-acid chain; its full sequence is UDP-N-acetylglucosamine 1-carboxyvinyltransferase (420 aa).

22-23 (KN) provides a ligand contact to phosphoenolpyruvate. A UDP-N-acetyl-alpha-D-glucosamine-binding site is contributed by R92. C116 acts as the Proton donor in catalysis. C116 carries the post-translational modification 2-(S-cysteinyl)pyruvic acid O-phosphothioketal. UDP-N-acetyl-alpha-D-glucosamine contacts are provided by residues 121–125 (RPIDL), D307, and L329.

This sequence belongs to the EPSP synthase family. MurA subfamily.

It is found in the cytoplasm. The catalysed reaction is phosphoenolpyruvate + UDP-N-acetyl-alpha-D-glucosamine = UDP-N-acetyl-3-O-(1-carboxyvinyl)-alpha-D-glucosamine + phosphate. It functions in the pathway cell wall biogenesis; peptidoglycan biosynthesis. In terms of biological role, cell wall formation. Adds enolpyruvyl to UDP-N-acetylglucosamine. This chain is UDP-N-acetylglucosamine 1-carboxyvinyltransferase, found in Nitratiruptor sp. (strain SB155-2).